Reading from the N-terminus, the 545-residue chain is Cannabidiolic acid synthase-like 1 (545 aa).

The N-terminal stretch at 1–28 is a signal peptide; it reads MKCSTFCFWYVCKIIFFFLSFNIQISIA. A disulfide bridge connects residues cysteine 37 and cysteine 99. N-linked (GlcNAc...) asparagine glycans are attached at residues asparagine 45, asparagine 65, asparagine 89, and asparagine 168. The FAD-binding PCMH-type domain occupies 77 to 251; that stretch reads TTPKPLVIIT…AAWKIRLVAV (175 aa). The 6-(S-cysteinyl)-8alpha-(pros-histidyl)-FAD (His-Cys) cross-link spans 114-176; that stretch reads HDAEGMSYIS…ENLSFPAGYC (63 aa). Position 292 (histidine 292) interacts with substrate. N-linked (GlcNAc...) asparagine glycosylation is found at asparagine 297, asparagine 305, asparagine 329, and asparagine 361. Tyrosine 417 lines the substrate pocket. N-linked (GlcNAc...) asparagine glycosylation is present at asparagine 467. Tyrosine 484 (proton acceptor) is an active-site residue. N-linked (GlcNAc...) asparagine glycosylation is present at asparagine 499.

Belongs to the oxygen-dependent FAD-linked oxidoreductase family. FAD serves as cofactor. The FAD cofactor is bound via a bicovalent 6-S-cysteinyl, 8alpha-N1-histidyl FAD linkage.

The protein resides in the secreted. Has no cannabidiolic acid synthase activity. This is Cannabidiolic acid synthase-like 1 (CBDAS2) from Cannabis sativa (Hemp).